Here is a 91-residue protein sequence, read N- to C-terminus: Cytochrome c-554(547) (91 aa).

Positions 15, 18, 19, and 64 each coordinate heme c.

As to quaternary structure, monomer. In terms of processing, binds 1 heme c group covalently per subunit.

The polypeptide is Cytochrome c-554(547) (Halothiobacillus neapolitanus (Thiobacillus neapolitanus)).